Here is a 790-residue protein sequence, read N- to C-terminus: Probable copper-transporting ATPase SynA (790 aa).

Topologically, residues 1–105 are cytoplasmic; the sequence is MPAAIVHSAD…IPPLQQQRLQ (105 aa). The region spanning 14–81 is the HMA domain; that stretch reads TSILVEVEGM…EITGLGFRAQ (68 aa). Residues Cys25 and Cys28 each contribute to the Cu cation site. The chain crosses the membrane as a helical span at residues 106–125; the sequence is LAIAAFLLIVSSWGHLGHWL. Topologically, residues 126–134 are extracellular; sequence DHPLPGTDQ. Residues 135–154 traverse the membrane as a helical segment; that stretch reads LWFHALLAIWALLGPGRSIL. Residues 155-166 are Cytoplasmic-facing; sequence QAGWQGLRCGAP. The chain crosses the membrane as a helical span at residues 167-189; sequence NMNSLVLLGTGSAYLASLVALLW. Over 190–193 the chain is Extracellular; sequence PQLG. The chain crosses the membrane as a helical span at residues 194 to 211; that stretch reads WVCFLDEPVMLLGFILLG. The Cytoplasmic portion of the chain corresponds to 212–357; that stretch reads RTLEEQARFR…RKAPVQRFAD (146 aa). Residues 358–380 form a helical membrane-spanning segment; sequence AIAGRFVYGVCAIAALTFGFWAT. At 381 to 416 the chain is on the extracellular side; sequence LGSRWWPQVLQQPLPGLLIHAPHHGMEMAHPHSHSP. A helical transmembrane segment spans residues 417-439; that stretch reads LLLALTLAISVLVVACPCALGLA. At 440–726 the chain is on the cytoplasmic side; sequence TPTAILVATG…QMGLRTIRQN (287 aa). The active-site 4-aspartylphosphate intermediate is the Asp476. The Mg(2+) site is built by Asp669 and Asp673. The chain crosses the membrane as a helical span at residues 727–749; that stretch reads LTWALGYNVVMLPLAAGAFLPAY. The Extracellular portion of the chain corresponds to 750-753; it reads GLAL. A helical transmembrane segment spans residues 754-776; that stretch reads TPAIAGACMAVSSLAVVSNSLLL. Topologically, residues 777-790 are cytoplasmic; that stretch reads RYWFRRSLNHSVSV.

Belongs to the cation transport ATPase (P-type) (TC 3.A.3) family. Type IB subfamily.

It is found in the cell membrane. It carries out the reaction Cu(2+)(in) + ATP + H2O = Cu(2+)(out) + ADP + phosphate + H(+). Its function is as follows. Involved in copper transport. The polypeptide is Probable copper-transporting ATPase SynA (synA) (Synechococcus sp. (strain ATCC 27144 / PCC 6301 / SAUG 1402/1) (Anacystis nidulans)).